A 222-amino-acid chain; its full sequence is Peptide methionine sulfoxide reductase MsrA (222 aa).

Cys-60 is a catalytic residue.

This sequence belongs to the MsrA Met sulfoxide reductase family.

The enzyme catalyses L-methionyl-[protein] + [thioredoxin]-disulfide + H2O = L-methionyl-(S)-S-oxide-[protein] + [thioredoxin]-dithiol. It catalyses the reaction [thioredoxin]-disulfide + L-methionine + H2O = L-methionine (S)-S-oxide + [thioredoxin]-dithiol. Functionally, has an important function as a repair enzyme for proteins that have been inactivated by oxidation. Catalyzes the reversible oxidation-reduction of methionine sulfoxide in proteins to methionine. This Pseudomonas putida (strain ATCC 47054 / DSM 6125 / CFBP 8728 / NCIMB 11950 / KT2440) protein is Peptide methionine sulfoxide reductase MsrA.